Reading from the N-terminus, the 156-residue chain is Small ribosomal subunit protein uS7c (156 aa).

Belongs to the universal ribosomal protein uS7 family. As to quaternary structure, part of the 30S ribosomal subunit.

The protein resides in the plastid. It is found in the chloroplast. One of the primary rRNA binding proteins, it binds directly to 16S rRNA where it nucleates assembly of the head domain of the 30S subunit. The chain is Small ribosomal subunit protein uS7c (rps7) from Pyropia yezoensis (Susabi-nori).